A 175-amino-acid chain; its full sequence is Large ribosomal subunit protein bL9 (175 aa).

This sequence belongs to the bacterial ribosomal protein bL9 family.

In terms of biological role, binds to the 23S rRNA. This Orientia tsutsugamushi (strain Boryong) (Rickettsia tsutsugamushi) protein is Large ribosomal subunit protein bL9.